The chain runs to 259 residues: 4-hydroxy-tetrahydrodipicolinate reductase (259 aa).

NAD(+) contacts are provided by residues 9-14 (GAGGRM) and Glu-35. Arg-36 lines the NADP(+) pocket. NAD(+) is bound by residues 92 to 94 (GTT) and 116 to 119 (APNM). Residue His-149 is the Proton donor/acceptor of the active site. His-150 contacts (S)-2,3,4,5-tetrahydrodipicolinate. Lys-153 serves as the catalytic Proton donor. 159 to 160 (GT) serves as a coordination point for (S)-2,3,4,5-tetrahydrodipicolinate.

This sequence belongs to the DapB family.

It localises to the cytoplasm. It carries out the reaction (S)-2,3,4,5-tetrahydrodipicolinate + NAD(+) + H2O = (2S,4S)-4-hydroxy-2,3,4,5-tetrahydrodipicolinate + NADH + H(+). The enzyme catalyses (S)-2,3,4,5-tetrahydrodipicolinate + NADP(+) + H2O = (2S,4S)-4-hydroxy-2,3,4,5-tetrahydrodipicolinate + NADPH + H(+). It functions in the pathway amino-acid biosynthesis; L-lysine biosynthesis via DAP pathway; (S)-tetrahydrodipicolinate from L-aspartate: step 4/4. In terms of biological role, catalyzes the conversion of 4-hydroxy-tetrahydrodipicolinate (HTPA) to tetrahydrodipicolinate. The sequence is that of 4-hydroxy-tetrahydrodipicolinate reductase from Oleidesulfovibrio alaskensis (strain ATCC BAA-1058 / DSM 17464 / G20) (Desulfovibrio alaskensis).